Reading from the N-terminus, the 496-residue chain is Beta-amylase (496 aa).

3 residues coordinate substrate: D54, H94, and D102. E187 acts as the Proton donor in catalysis. Positions 296, 301, and 343 each coordinate substrate. E381 functions as the Proton acceptor in the catalytic mechanism. Substrate contacts are provided by residues 382–383 (NA) and R421.

It belongs to the glycosyl hydrolase 14 family.

It catalyses the reaction Hydrolysis of (1-&gt;4)-alpha-D-glucosidic linkages in polysaccharides so as to remove successive maltose units from the non-reducing ends of the chains.. This Vigna unguiculata (Cowpea) protein is Beta-amylase (BMY1).